The chain runs to 475 residues: Methylenomycin A resistance protein (475 aa).

Helical transmembrane passes span 28–48, 65–85, 93–113, 123–143, 152–172, 173–193, 212–232, 240–260, 285–305, 314–334, 346–366, 371–391, 416–436, and 439–459; these read ITAL…VNVA, WIVD…GGLA, VYLW…LAPT, VQGA…VFSF, MLGL…TVGG, LMVS…IGAI, LAVP…FALI, TAGP…LLAL, LVGF…GLYF, FQAG…NIVY, LLTA…TITA, WVVA…SPGM, QIGS…TSDW, and GAAI…LSAW.

It belongs to the major facilitator superfamily.

The protein resides in the cell membrane. Its function is as follows. Resistance to the epoxide antibiotic methylenomycin A; probably by mediating its efflux. This chain is Methylenomycin A resistance protein (mmr), found in Streptomyces coelicolor (strain ATCC BAA-471 / A3(2) / M145).